Reading from the N-terminus, the 251-residue chain is uncharacterized protein (251 aa).

Residues 1 to 18 (MRILIILSIILCSLSIRA) form the signal peptide.

The protein belongs to the MlaA family.

This is an uncharacterized protein from Rickettsia conorii (strain ATCC VR-613 / Malish 7).